Consider the following 301-residue polypeptide: Retinochrome (301 aa).

Residues 1 to 17 lie on the Extracellular side of the membrane; that stretch reads MFGNPAMTGLHQFTMWE. A helical membrane pass occupies residues 18 to 43; the sequence is HYFTGSIYLVLGCVVFSLCGMCIIFL. At 44–54 the chain is on the cytoplasmic side; it reads ARQSPKPRRKY. Residues 55–76 traverse the membrane as a helical segment; that stretch reads AILIHVLITAMAVNGGDPAHAS. At 77-94 the chain is on the extracellular side; that stretch reads SSIVGRWLYGSVGCQLMG. Residues 95-120 traverse the membrane as a helical segment; it reads FWGFFGGMSHIWMLFAFAMERYMAVC. At 121–132 the chain is on the cytoplasmic side; the sequence is HREFYQQMPSVY. The chain crosses the membrane as a helical span at residues 133 to 153; the sequence is YSIIVGLMYTFGTFWATMPLL. Residues 154 to 180 are Extracellular-facing; sequence GWASYGLEVHGTSCTINYSVSDESYQS. The N-linked (GlcNAc...) asparagine glycan is linked to N170. Residues 181-208 form a helical membrane-spanning segment; sequence YVFFLAIFSFIFPMVSGWYAISKAWSGL. Topologically, residues 209 to 230 are cytoplasmic; sequence SAIPDAEKEKDKDILSEEQLTA. Residues 231-255 traverse the membrane as a helical segment; it reads LAGAFILISLISWSGFGYVAIYSAL. Topologically, residues 256 to 264 are extracellular; that stretch reads THGGAQLSH. A helical transmembrane segment spans residues 265–289; the sequence is LRGHVPPIMSKTGCALFPLLIFLLT. N6-(retinylidene)lysine is present on K275. The Cytoplasmic segment spans residues 290–301; sequence ARSLPKSDTKKP.

Belongs to the G-protein coupled receptor 1 family. Opsin subfamily. In terms of tissue distribution, mainly stored in myeloid bodies of the inner segments.

The protein localises to the membrane. Functionally, retinochrome is capable of acting as an effective catalyst in the light to convert various isomers of retinal into 11-cis, the form that is required by opsin to resynthesize rhodopsin. This chain is Retinochrome, found in Todarodes pacificus (Japanese flying squid).